The primary structure comprises 173 residues: Protein C2 (173 aa).

The segment at 69–85 is a zinc-finger region; sequence CNCHFTIHHECNRGFSH.

Belongs to the geminiviridae transcriptional activator protein family. As to quaternary structure, monomer. Interacting with and inactivating host adenosine kinase 2 (ADK2) in the cytoplasm. Interacts with and inhibits host SNF1 kinase.

It localises to the host cytoplasm. Its function is as follows. Acts as a suppressor of RNA-mediated gene silencing, also known as post-transcriptional gene silencing (PTGS), a mechanism of plant viral defense that limits the accumulation of viral RNAs. Suppresses the host RNA silencing by inhibiting adenosine kinase 2 (ADK2), a kinase involved in a general methylation pathway. Also suppresses the host basal defense by interacting with and inhibiting SNF1 kinase, a key regulator of cell metabolism implicated in innate antiviral defense. Determines pathogenicity. This Beet curly top virus (strain California/Logan) (BCTV) protein is Protein C2.